A 48-amino-acid chain; its full sequence is Glycine-rich RNA-binding protein 2 (48 aa).

The protein is Glycine-rich RNA-binding protein 2 of Populus euphratica (Euphrates poplar).